Consider the following 221-residue polypeptide: Tumor protein p53-inducible nuclear protein 2 (221 aa).

The LIR motif lies at 26 to 41 (VSEEDEVDGWLIIDLQ). The tract at residues 41-68 (QDSYTAPPDPGASPAPAGRPPPAPSLMD) is disordered. The span at 47–64 (PPDPGASPAPAGRPPPAP) shows a compositional bias: pro residues. Phosphoserine is present on Ser136. A disordered region spans residues 177–210 (RQRAERHTLSAKVLQRQNRARESRSRRPKHQGSF).

In terms of assembly, interacts with VMP1, GABARAP, GABARAPL1, GABARAPL2, MAP1LC3A, MAP1LC3B, MAP1LC3C and THRA.

It localises to the cytoplasm. The protein localises to the cytosol. It is found in the nucleus. The protein resides in the PML body. Its subcellular location is the cytoplasmic vesicle. It localises to the autophagosome. Its function is as follows. Dual regulator of transcription and autophagy. Positively regulates autophagy and is required for autophagosome formation and processing. May act as a scaffold protein that recruits MAP1LC3A, GABARAP and GABARAPL2 and brings them to the autophagosome membrane by interacting with VMP1 where, in cooperation with the BECN1-PI3-kinase class III complex, they trigger autophagosome development. Acts as a transcriptional activator of THRA. This Mus musculus (Mouse) protein is Tumor protein p53-inducible nuclear protein 2 (Tp53inp2).